A 446-amino-acid polypeptide reads, in one-letter code: Neuropeptide Y receptor type 5 (446 aa).

Topologically, residues 1–42 (MGSEIPDYYNKTLASENNTVATRNSGFPVWEDYKGSVDDLQY) are extracellular. Asparagine 10 and asparagine 17 each carry an N-linked (GlcNAc...) asparagine glycan. The chain crosses the membrane as a helical span at residues 43 to 63 (FLIGLYTFVSLLGFMGNLLIL). Over 64-77 (MAVMRKRNQKTTVN) the chain is Cytoplasmic. The helical transmembrane segment at 78-98 (FLIGNLAFSDILVVLFCSPFT) threads the bilayer. Residues 99-117 (LTSVLLDQWMFGKVMCHIM) lie on the Extracellular side of the membrane. Cysteines 114 and 198 form a disulfide. Residues 118–138 (PFLQCVTVLVSTLILISIAIV) form a helical membrane-spanning segment. At 139 to 156 (RYHMIKHPVSNNLTANHG) the chain is on the cytoplasmic side. A helical transmembrane segment spans residues 157–177 (YFLIATVWTLGLAICSPLPVF). Residues 178 to 208 (HSLVELQESFGSAWLSSRYLCVESWPSDSYR) lie on the Extracellular side of the membrane. A helical membrane pass occupies residues 209 to 229 (IAFTISLLLVQYILPLVCLTV). At 230 to 369 (SHTSVCRTIS…RKRSRSVFYR (140 aa)) the chain is on the cytoplasmic side. The disordered stretch occupies residues 297-325 (RPAPAGPALESREGRPPGKVGSMQSQPPP). The helical transmembrane segment at 370–390 (LTVLILVFAVSWMPLHLFHVV) threads the bilayer. Over 391–407 (TDFNDNLISNRHFKLVY) the chain is Extracellular. The helical transmembrane segment at 408 to 428 (CICHLLGMMSCCLNPILYGFL) threads the bilayer. The Cytoplasmic segment spans residues 429 to 446 (NNGIKADLMSLIHCLHVS). Residue cysteine 442 is the site of S-palmitoyl cysteine attachment.

It belongs to the G-protein coupled receptor 1 family.

The protein localises to the cell membrane. Functionally, receptor for neuropeptide Y and peptide YY. The activity of this receptor is mediated by G proteins that inhibit adenylate cyclase activity. Seems to be associated with food intake. Could be involved in feeding disorders. The polypeptide is Neuropeptide Y receptor type 5 (NPY5R) (Sus scrofa (Pig)).